Consider the following 315-residue polypeptide: DNA-directed RNA polymerase subunit alpha (315 aa).

Residues 1–228 (MLEIEKPKIE…EHLRLFIGLT (228 aa)) are alpha N-terminal domain (alpha-NTD). The segment at 246–315 (DKILEMTIEE…LGLSLRQEDE (70 aa)) is alpha C-terminal domain (alpha-CTD).

This sequence belongs to the RNA polymerase alpha chain family. Homodimer. The RNAP catalytic core consists of 2 alpha, 1 beta, 1 beta' and 1 omega subunit. When a sigma factor is associated with the core the holoenzyme is formed, which can initiate transcription.

It catalyses the reaction RNA(n) + a ribonucleoside 5'-triphosphate = RNA(n+1) + diphosphate. DNA-dependent RNA polymerase catalyzes the transcription of DNA into RNA using the four ribonucleoside triphosphates as substrates. The sequence is that of DNA-directed RNA polymerase subunit alpha from Desulforamulus reducens (strain ATCC BAA-1160 / DSM 100696 / MI-1) (Desulfotomaculum reducens).